Consider the following 146-residue polypeptide: Pseudoazurin (146 aa).

An N-terminal signal peptide occupies residues 1–23; sequence MRNIAIKFAAAGILAMLAAPALA. A Plastocyanin-like domain is found at 28–116; sequence VHMLNKGAEG…MGMIALIAVG (89 aa). Residues His63, Cys101, His104, and Met109 each coordinate Cu cation.

Cu cation serves as cofactor.

The protein resides in the periplasm. Its function is as follows. This soluble electron transfer copper protein is required for the inactivation of copper-containing nitrite reductase in the presence of oxygen. Serves as a direct electron donor to the nitrite reductase. The protein is Pseudoazurin of Alcaligenes faecalis.